Consider the following 376-residue polypeptide: 1-acyl-sn-glycerol-3-phosphate acyltransferase gamma (376 aa).

Topologically, residues Met-1–Arg-124 are cytoplasmic. The HXXXXD motif motif lies at His-96–Asp-101. The helical transmembrane segment at Glu-125–Lys-145 threads the bilayer. At Arg-146 to Thr-316 the chain is on the lumenal side. Residues Ile-317–Leu-339 traverse the membrane as a helical segment. Residues Thr-340–Glu-376 lie on the Cytoplasmic side of the membrane.

This sequence belongs to the 1-acyl-sn-glycerol-3-phosphate acyltransferase family. In terms of tissue distribution, widely expressed. Mainly expressed in testis, kidney and liver (at protein level).

It localises to the endoplasmic reticulum membrane. The protein resides in the nucleus envelope. It catalyses the reaction a 1-acyl-sn-glycero-3-phosphate + an acyl-CoA = a 1,2-diacyl-sn-glycero-3-phosphate + CoA. The catalysed reaction is pentadecanoyl-CoA + 1-(9Z-octadecenoyl)-sn-glycero-3-phosphate = 1-(9Z)-octadecenoyl-2-pentadecanoyl-sn-glycero-3-phosphate + CoA. It carries out the reaction heptadecanoyl-CoA + 1-(9Z-octadecenoyl)-sn-glycero-3-phosphate = 1-(9Z)-octadecenoyl-2-heptadecanoyl-sn-glycero-3-phosphate + CoA. The enzyme catalyses 1-(9Z-octadecenoyl)-sn-glycero-3-phosphate + octadecanoyl-CoA = 1-(9Z-octadecenoyl)-2-octadecanoyl-sn-glycero-3-phosphate + CoA. It catalyses the reaction nonadecanoyl-CoA + 1-(9Z-octadecenoyl)-sn-glycero-3-phosphate = 1-(9Z)-octadecenoyl-2-nonadecanoyl-sn-glycero-3-phosphate + CoA. The catalysed reaction is 1-(9Z-octadecenoyl)-sn-glycero-3-phosphate + (5Z,8Z,11Z,14Z)-eicosatetraenoyl-CoA = 1-(9Z)-octadecenoyl-2-(5Z,8Z,11Z,14Z)-eicosatetraenoyl-sn-glycero-3-phosphate + CoA. It carries out the reaction 1-(9Z-octadecenoyl)-sn-glycero-3-phosphate + (9Z)-octadecenoyl-CoA = 1,2-di-(9Z-octadecenoyl)-sn-glycero-3-phosphate + CoA. The enzyme catalyses 1-(9Z-octadecenoyl)-sn-glycero-3-phosphate + (9Z,12Z)-octadecadienoyl-CoA = 1-(9Z)-octadecenoyl-2-(9Z,12Z)-octadecadienoyl-sn-glycero-3-phosphate + CoA. It catalyses the reaction 1-(9Z-octadecenoyl)-sn-glycero-3-phosphocholine + (5Z,8Z,11Z,14Z)-eicosatetraenoyl-CoA = 1-(9Z)-octadecenoyl-2-(5Z,8Z,11Z,14Z)-icosatetraenoyl-sn-glycero-3-phosphocholine + CoA. The catalysed reaction is 1-(9Z-octadecenoyl)-sn-glycero-3-phospho-(1D-myo-inositol) + (5Z,8Z,11Z,14Z)-eicosatetraenoyl-CoA = 1-(9Z-octadecenoyl)-2-(5Z,8Z,11Z,14Z-eicosatetraenoyl)-sn-glycero-3-phospho-1D-myo-inositol + CoA. It carries out the reaction 1-(9Z-octadecenoyl)-sn-glycero-3-phospho-L-serine + (5Z,8Z,11Z,14Z)-eicosatetraenoyl-CoA = 1-(9Z-octadecenoyl)-2-(5Z,8Z,11Z,14Z-eicosatetraenoyl)-sn-glycero-3-phospho-L-serine + CoA. The enzyme catalyses 1-hexadecanoyl-sn-glycero-3-phosphate + (9Z)-octadecenoyl-CoA = 1-hexadecanoyl-2-(9Z-octadecenoyl)-sn-glycero-3-phosphate + CoA. It catalyses the reaction 1-hexadecanoyl-sn-glycero-3-phosphate + (5Z,8Z,11Z,14Z)-eicosatetraenoyl-CoA = 1-hexadecanoyl-2-(5Z,8Z,11Z,14Z-eicosatetraenoyl)-sn-glycero-3-phosphate + CoA. The catalysed reaction is 1-heptadecanoyl-sn-glycero-3-phosphate + (5Z,8Z,11Z,14Z)-eicosatetraenoyl-CoA = 1-heptadecanoyl-2-(5Z,8Z,11Z,14Z)-eicosatetraenoyl-sn-glycero-3-phosphate + CoA. It carries out the reaction 1-octadecanoyl-sn-glycero-3-phosphate + (9Z)-octadecenoyl-CoA = 1-octadecanoyl-2-(9Z-octadecenoyl)-sn-glycero-3-phosphate + CoA. The enzyme catalyses 1-octadecanoyl-sn-glycero-3-phosphate + (5Z,8Z,11Z,14Z)-eicosatetraenoyl-CoA = 1-octadecanoyl-2-(5Z,8Z,11Z,14Z-eicosatetraenoyl)-sn-glycero-3-phosphate + CoA. It catalyses the reaction 1-(9Z-octadecenoyl)-sn-glycero-3-phosphate + hexadecanoyl-CoA = 1-hexadecanoyl-2-(9Z-octadecenoyl)-sn-glycero-3-phosphate + CoA. The catalysed reaction is 1-O-(9Z-octadecenyl)-sn-glycero-3-phosphate + (5Z,8Z,11Z,14Z)-eicosatetraenoyl-CoA = 1-O-(9Z-octadecenyl)-2-(5Z,8Z,11Z,14Z-eicosatetraenoyl)-sn-glycero-3-phosphate + CoA. It carries out the reaction a 1-acyl-sn-glycero-3-phospho-(1D-myo-inositol) + (5Z,8Z,11Z,14Z)-eicosatetraenoyl-CoA = a 1-acyl-2-(5Z,8Z,11Z,14Z-eicosatetraenoyl)-sn-glycero-3-phospho-(1D-myo-inositol) + CoA. Its pathway is phospholipid metabolism; CDP-diacylglycerol biosynthesis; CDP-diacylglycerol from sn-glycerol 3-phosphate: step 2/3. Its activity is regulated as follows. In males, activity increases in an age-dependent fashion, maybe derived from the induction by sex-hormones. Functionally, converts 1-acyl-sn-glycerol-3-phosphate (lysophosphatidic acid or LPA) into 1,2-diacyl-sn-glycerol-3-phosphate (phosphatidic acid or PA) by incorporating an acyl moiety at the sn-2 position of the glycerol backbone. Acts on LPA containing saturated or unsaturated fatty acids C16:0-C20:4 at the sn-1 position using C18:1, C20:4 or C18:2-CoA as the acyl donor. Also acts on lysophosphatidylcholine, lysophosphatidylinositol and lysophosphatidylserine using C18:1 or C20:4-CoA. Has a preference for arachidonoyl-CoA as a donor. Also has a modest lysophosphatidylinositol acyltransferase (LPIAT) activity, converts lysophosphatidylinositol (LPI) into phosphatidylinositol. The polypeptide is 1-acyl-sn-glycerol-3-phosphate acyltransferase gamma (Mus musculus (Mouse)).